The chain runs to 203 residues: Outer-membrane lipoprotein LolB (203 aa).

The first 21 residues, 1-21 (MTGRWSPRLLAGLLAALVLSG), serve as a signal peptide directing secretion. A lipid anchor (N-palmitoyl cysteine) is attached at cysteine 22. Cysteine 22 carries S-diacylglycerol cysteine lipidation.

This sequence belongs to the LolB family. In terms of assembly, monomer.

The protein resides in the cell outer membrane. In terms of biological role, plays a critical role in the incorporation of lipoproteins in the outer membrane after they are released by the LolA protein. The polypeptide is Outer-membrane lipoprotein LolB (Halorhodospira halophila (strain DSM 244 / SL1) (Ectothiorhodospira halophila (strain DSM 244 / SL1))).